The sequence spans 56 residues: Conotoxin Bu12 (56 aa).

Residues 1 to 2 (TA) form the signal peptide. Residues 3–25 (EDSRGTQLHRALRKATKLPVSTR) constitute a propeptide that is removed on maturation. 3 cysteine pairs are disulfide-bonded: C26–C40, C33–C44, and C39–C49.

The protein belongs to the conotoxin O1 superfamily. Expressed by the venom duct.

It localises to the secreted. The protein is Conotoxin Bu12 of Conus bullatus (Bubble cone).